Here is a 186-residue protein sequence, read N- to C-terminus: Lipoprotein signal peptidase (186 aa).

The next 4 helical transmembrane spans lie at 8-28, 44-64, 66-86, and 97-117; these read FFSV…FLDL, IPVL…FVFG, FQDN…FLIF, and AWGW…KFFV. Active-site residues include aspartate 142 and aspartate 164. Residues 157–177 form a helical membrane-spanning segment; sequence WPAFNVADSCVSIGIVILLFT.

This sequence belongs to the peptidase A8 family.

It is found in the cell inner membrane. It catalyses the reaction Release of signal peptides from bacterial membrane prolipoproteins. Hydrolyzes -Xaa-Yaa-Zaa-|-(S,diacylglyceryl)Cys-, in which Xaa is hydrophobic (preferably Leu), and Yaa (Ala or Ser) and Zaa (Gly or Ala) have small, neutral side chains.. Its pathway is protein modification; lipoprotein biosynthesis (signal peptide cleavage). Functionally, this protein specifically catalyzes the removal of signal peptides from prolipoproteins. The sequence is that of Lipoprotein signal peptidase from Leptospira biflexa serovar Patoc (strain Patoc 1 / ATCC 23582 / Paris).